A 328-amino-acid polypeptide reads, in one-letter code: Phenylalanine--tRNA ligase alpha subunit (328 aa).

Glutamate 245 contacts Mg(2+).

It belongs to the class-II aminoacyl-tRNA synthetase family. Phe-tRNA synthetase alpha subunit type 1 subfamily. In terms of assembly, tetramer of two alpha and two beta subunits. It depends on Mg(2+) as a cofactor.

The protein resides in the cytoplasm. It carries out the reaction tRNA(Phe) + L-phenylalanine + ATP = L-phenylalanyl-tRNA(Phe) + AMP + diphosphate + H(+). The protein is Phenylalanine--tRNA ligase alpha subunit of Helicobacter pylori (strain HPAG1).